The primary structure comprises 303 residues: Pycsar effector protein BcPycTIR (303 aa).

22–138 (KLVGGDKGLA…RRMAKELSKR (117 aa)) lines the a nucleoside 3',5'-cyclic phosphate pocket. The tract at residues 154–273 (RVFVISSAEA…DMAGVTTIPY (120 aa)) is TIR-like.

As to quaternary structure, purified protein forms large 2-dimensional sheets when incubated with cUMP and shorter filaments in the presence of cCMP.

It localises to the cytoplasm. It carries out the reaction NAD(+) + H2O = ADP-D-ribose + nicotinamide + H(+). Its activity is regulated as follows. Activated by cyclic UMP (cUMP) and to a lesser extent by cCMP. In terms of biological role, pycsar (pyrimidine cyclase system for antiphage resistance) provides immunity against bacteriophage. The pyrimidine cyclase (PycC) synthesizes cyclic nucleotides in response to infection; these serve as specific second messenger signals. The signals activate the adjacent effector, leading to bacterial cell death and abortive phage infection. A clade B Pycsar system. Functionally, the effector protein of a two-gene Pycsar system. Upon activation by cyclic UMP (cUMP) degrades cellular NAD(+). Expression of this and adjacent uridylate cyclase BcPycC (AC A0A0J5ZXG5) probably confers resistance to bacteriophage. The genes are probably only expressed in response to bacteriophage infection. This protein probably only responds to cUMP (produced by its cognate NTP cyclase). The polypeptide is Pycsar effector protein BcPycTIR (Burkholderia cepacia (Pseudomonas cepacia)).